Here is a 178-residue protein sequence, read N- to C-terminus: Dual-action ribosomal maturation protein DarP (178 aa).

Belongs to the DarP family.

It is found in the cytoplasm. Functionally, member of a network of 50S ribosomal subunit biogenesis factors which assembles along the 30S-50S interface, preventing incorrect 23S rRNA structures from forming. Promotes peptidyl transferase center (PTC) maturation. The sequence is that of Dual-action ribosomal maturation protein DarP from Haemophilus influenzae (strain PittEE).